Reading from the N-terminus, the 459-residue chain is Phosphoglucosamine mutase (459 aa).

Ser-112 serves as the catalytic Phosphoserine intermediate. Residues Ser-112, Asp-249, Asp-251, and Asp-253 each contribute to the Mg(2+) site. Phosphoserine is present on Ser-112.

It belongs to the phosphohexose mutase family. Mg(2+) serves as cofactor. Post-translationally, activated by phosphorylation.

The enzyme catalyses alpha-D-glucosamine 1-phosphate = D-glucosamine 6-phosphate. Its function is as follows. Catalyzes the conversion of glucosamine-6-phosphate to glucosamine-1-phosphate. In Synechococcus sp. (strain RCC307), this protein is Phosphoglucosamine mutase.